A 152-amino-acid chain; its full sequence is Vasotocin-neurophysin VT 1 (152 aa).

A signal peptide spans 1 to 19 (MSDSFLPTCILCLLALSSA). The cysteines at positions 20 and 25 are disulfide-linked. Gly-28 bears the Glycine amide mark. Disulfide bonds link Cys-40–Cys-84, Cys-43–Cys-57, Cys-51–Cys-74, Cys-58–Cys-64, Cys-91–Cys-103, Cys-97–Cys-115, and Cys-104–Cys-109.

The protein belongs to the vasopressin/oxytocin family.

Its subcellular location is the secreted. Its function is as follows. Vasotocin is an antidiuretic hormone. This Catostomus commersonii (White sucker) protein is Vasotocin-neurophysin VT 1.